A 294-amino-acid chain; its full sequence is uncharacterized protein (294 aa).

Its subcellular location is the mitochondrion. This is an uncharacterized protein from Zea mays (Maize).